We begin with the raw amino-acid sequence, 305 residues long: 4-hydroxy-tetrahydrodipicolinate synthase 1 (305 aa).

Thr53 is a binding site for pyruvate. The Proton donor/acceptor role is filled by Tyr141. Lys169 acts as the Schiff-base intermediate with substrate in catalysis. Position 209 (Val209) interacts with pyruvate.

Belongs to the DapA family. As to quaternary structure, homotetramer; dimer of dimers.

It is found in the cytoplasm. It carries out the reaction L-aspartate 4-semialdehyde + pyruvate = (2S,4S)-4-hydroxy-2,3,4,5-tetrahydrodipicolinate + H2O + H(+). The protein operates within amino-acid biosynthesis; L-lysine biosynthesis via DAP pathway; (S)-tetrahydrodipicolinate from L-aspartate: step 3/4. Its function is as follows. Catalyzes the condensation of (S)-aspartate-beta-semialdehyde [(S)-ASA] and pyruvate to 4-hydroxy-tetrahydrodipicolinate (HTPA). This Streptomyces coelicolor (strain ATCC BAA-471 / A3(2) / M145) protein is 4-hydroxy-tetrahydrodipicolinate synthase 1.